A 341-amino-acid polypeptide reads, in one-letter code: Undecaprenyl-phosphate 4-deoxy-4-formamido-L-arabinose transferase (341 aa).

2 helical membrane passes run 235–255 and 269–289; these read LSIV…ALIV and LFVL…GMGL.

It belongs to the glycosyltransferase 2 family.

It localises to the cell inner membrane. The enzyme catalyses UDP-4-deoxy-4-formamido-beta-L-arabinose + di-trans,octa-cis-undecaprenyl phosphate = 4-deoxy-4-formamido-alpha-L-arabinopyranosyl di-trans,octa-cis-undecaprenyl phosphate + UDP. It functions in the pathway glycolipid biosynthesis; 4-amino-4-deoxy-alpha-L-arabinose undecaprenyl phosphate biosynthesis; 4-amino-4-deoxy-alpha-L-arabinose undecaprenyl phosphate from UDP-4-deoxy-4-formamido-beta-L-arabinose and undecaprenyl phosphate: step 1/2. Its pathway is bacterial outer membrane biogenesis; lipopolysaccharide biosynthesis. Catalyzes the transfer of 4-deoxy-4-formamido-L-arabinose from UDP to undecaprenyl phosphate. The modified arabinose is attached to lipid A and is required for resistance to polymyxin and cationic antimicrobial peptides. In Pseudomonas fluorescens (strain SBW25), this protein is Undecaprenyl-phosphate 4-deoxy-4-formamido-L-arabinose transferase.